The sequence spans 507 residues: Methionine--tRNA ligase (507 aa).

The 'HIGH' region signature appears at 12–22 (YYVNDVSHIGH). The 'KMSKS' region signature appears at 295–299 (KISKS). Lys-298 is an ATP binding site.

The protein belongs to the class-I aminoacyl-tRNA synthetase family. MetG type 2B subfamily. Monomer.

It localises to the cytoplasm. It carries out the reaction tRNA(Met) + L-methionine + ATP = L-methionyl-tRNA(Met) + AMP + diphosphate. Is required not only for elongation of protein synthesis but also for the initiation of all mRNA translation through initiator tRNA(fMet) aminoacylation. In Rickettsia typhi (strain ATCC VR-144 / Wilmington), this protein is Methionine--tRNA ligase.